Consider the following 653-residue polypeptide: Threonine--tRNA ligase (653 aa).

In terms of domain architecture, TGS spans 1 to 61 (MIKITFPDGN…NEDAEVKLFK (61 aa)). Positions 243-542 (DHRKIGKELE…LIEHTAGKFP (300 aa)) are catalytic. Residues Cys-338, His-389, and His-519 each contribute to the Zn(2+) site.

Belongs to the class-II aminoacyl-tRNA synthetase family. Homodimer. Zn(2+) serves as cofactor.

It is found in the cytoplasm. The enzyme catalyses tRNA(Thr) + L-threonine + ATP = L-threonyl-tRNA(Thr) + AMP + diphosphate + H(+). Its function is as follows. Catalyzes the attachment of threonine to tRNA(Thr) in a two-step reaction: L-threonine is first activated by ATP to form Thr-AMP and then transferred to the acceptor end of tRNA(Thr). Also edits incorrectly charged L-seryl-tRNA(Thr). The chain is Threonine--tRNA ligase from Porphyromonas gingivalis (strain ATCC BAA-308 / W83).